The chain runs to 174 residues: Peroxisome assembly protein 22 (174 aa).

The helical transmembrane segment at 9–27 threads the bilayer; it reads GYLAIIAAVSIGAAAYLWW.

The protein belongs to the peroxin-22 family.

Its subcellular location is the peroxisome membrane. In terms of biological role, involved in peroxisome biogenesis. This is Peroxisome assembly protein 22 (PEX22) from Candida glabrata (strain ATCC 2001 / BCRC 20586 / JCM 3761 / NBRC 0622 / NRRL Y-65 / CBS 138) (Yeast).